We begin with the raw amino-acid sequence, 109 residues long: Large ribosomal subunit protein uL24 (109 aa).

It belongs to the universal ribosomal protein uL24 family. As to quaternary structure, part of the 50S ribosomal subunit.

In terms of biological role, one of two assembly initiator proteins, it binds directly to the 5'-end of the 23S rRNA, where it nucleates assembly of the 50S subunit. Functionally, one of the proteins that surrounds the polypeptide exit tunnel on the outside of the subunit. This is Large ribosomal subunit protein uL24 from Ehrlichia chaffeensis (strain ATCC CRL-10679 / Arkansas).